Here is a 307-residue protein sequence, read N- to C-terminus: ATP-dependent (S)-NAD(P)H-hydrate dehydratase (307 aa).

Residues 1 to 291 (MDHFLKLLPK…DEIPKLVRDV (291 aa)) form the YjeF C-terminal domain. Residues Gly96 and 150–156 (NIVEFSR) each bind (6S)-NADPHX. ATP is bound by residues 194-198 (KGEVD) and 214-223 (SSLRRCGGQG). Position 224 (Asp224) interacts with (6S)-NADPHX.

Belongs to the NnrD/CARKD family. Requires Mg(2+) as cofactor.

The catalysed reaction is (6S)-NADHX + ATP = ADP + phosphate + NADH + H(+). It carries out the reaction (6S)-NADPHX + ATP = ADP + phosphate + NADPH + H(+). In terms of biological role, catalyzes the dehydration of the S-form of NAD(P)HX at the expense of ATP, which is converted to ADP. Together with NAD(P)HX epimerase, which catalyzes the epimerization of the S- and R-forms, the enzyme allows the repair of both epimers of NAD(P)HX, a damaged form of NAD(P)H that is a result of enzymatic or heat-dependent hydration. This is ATP-dependent (S)-NAD(P)H-hydrate dehydratase from Caenorhabditis briggsae.